Reading from the N-terminus, the 171-residue chain is Pro-corazonin (171 aa).

Positions methionine 1 to alanine 20 are cleaved as a signal peptide. Position 21 is a pyrrolidone carboxylic acid (glutamine 21). Asparagine amide is present on asparagine 31. The propeptide occupies phenylalanine 82–alanine 171.

The protein belongs to the corazonin family.

It localises to the secreted. Its function is as follows. Cardioactive peptide. Corazonin is probably involved in the physiological regulation of the heart beat. This is Pro-corazonin from Anopheles gambiae (African malaria mosquito).